Reading from the N-terminus, the 194-residue chain is NAD(P)H:quinone oxidoreductase (194 aa).

Belongs to the SsuE family. As to quaternary structure, homotetramer. The cofactor is FMN.

The catalysed reaction is a quinone + NADH + H(+) = a quinol + NAD(+). It catalyses the reaction a quinone + NADPH + H(+) = a quinol + NADP(+). The enzyme apparently serves as a quinone reductase in connection with conjugation reactions of hydroquinones involved in detoxification pathways. In Solanum tuberosum (Potato), this protein is NAD(P)H:quinone oxidoreductase.